Consider the following 134-residue polypeptide: Profilin-2 (134 aa).

Cys13 and Cys118 form a disulfide bridge. The short motif at 84–100 is the Involved in PIP2 interaction element; it reads AVIRGKKGSGGITIKKT. At Thr114 the chain carries Phosphothreonine.

The protein belongs to the profilin family. Occurs in many kinds of cells as a complex with monomeric actin in a 1:1 ratio. Phosphorylated by MAP kinases.

It is found in the cytoplasm. Its subcellular location is the cytoskeleton. In terms of biological role, binds to actin and affects the structure of the cytoskeleton. At high concentrations, profilin prevents the polymerization of actin, whereas it enhances it at low concentrations. The chain is Profilin-2 from Olea europaea (Common olive).